Reading from the N-terminus, the 365-residue chain is Deoxyguanosinetriphosphate triphosphohydrolase-like protein (365 aa).

An HD domain is found at 52-187 (RLTHSIEVSQ…VDHADEIAYV (136 aa)).

Belongs to the dGTPase family. Type 2 subfamily.

This is Deoxyguanosinetriphosphate triphosphohydrolase-like protein from Wolinella succinogenes (strain ATCC 29543 / DSM 1740 / CCUG 13145 / JCM 31913 / LMG 7466 / NCTC 11488 / FDC 602W) (Vibrio succinogenes).